The sequence spans 1038 residues: Translation initiation factor IF-2 (1038 aa).

Residues 48-426 are disordered; it reads DALQGPGGNA…RQRRQEYEAM (379 aa). Residues 58-87 show a composition bias toward low complexity; sequence GKSAAKPGAPRKAAPAKPAAPSPAAAARPA. The segment covering 88 to 99 has biased composition (pro residues); sequence APKPGAPAPKPA. Residues 100–114 are compositionally biased toward low complexity; sequence EAPSSTPAAPSAPSA. The span at 115–125 shows a compositional bias: pro residues; sequence GPRPGPKPAPK. Over residues 126–141 the composition is skewed to low complexity; the sequence is AAPVTPVPAAEFSAPA. The span at 142 to 153 shows a compositional bias: pro residues; sequence PAQPAAPQPQAP. Residues 177–199 are compositionally biased toward basic and acidic residues; sequence DGGRDGGQRDGGRGGERGGDRPA. Positions 200 to 219 are enriched in low complexity; it reads RPAGQGAPRPGGARPAGPRP. Positions 261–277 are enriched in gly residues; that stretch reads SGPGGAPRPQGGQGQGG. Residues 299–315 are compositionally biased toward low complexity; that stretch reads GNRPNPGMMPQRPAAGP. The segment covering 319-406 has biased composition (gly residues); it reads PGGGGRGPGG…GTQGAFGRPG (88 aa). Positions 410-419 are enriched in basic residues; that stretch reads RRGRKSKRQR. A tr-type G domain is found at 531–703; the sequence is SRPPVVTVMG…VVLTADASLD (173 aa). The interval 540–547 is G1; the sequence is GHVDHGKT. GTP is bound at residue 540–547; it reads GHVDHGKT. The G2 stretch occupies residues 565-569; that stretch reads GITQH. Residues 590 to 593 are G3; it reads DTPG. Residues 590–594 and 644–647 contribute to the GTP site; these read DTPGH and NKID. The G4 stretch occupies residues 644-647; that stretch reads NKID. The segment at 680 to 682 is G5; it reads SAK.

It belongs to the TRAFAC class translation factor GTPase superfamily. Classic translation factor GTPase family. IF-2 subfamily.

Its subcellular location is the cytoplasm. Functionally, one of the essential components for the initiation of protein synthesis. Protects formylmethionyl-tRNA from spontaneous hydrolysis and promotes its binding to the 30S ribosomal subunits. Also involved in the hydrolysis of GTP during the formation of the 70S ribosomal complex. This Streptomyces griseus subsp. griseus (strain JCM 4626 / CBS 651.72 / NBRC 13350 / KCC S-0626 / ISP 5235) protein is Translation initiation factor IF-2.